A 298-amino-acid polypeptide reads, in one-letter code: Cyclin-dependent kinase 2 homolog (298 aa).

The 281-residue stretch at 4–284 folds into the Protein kinase domain; that stretch reads YHKMEKIGEG…AKEALKHDYF (281 aa). Residues 10–18 and K32 each bind ATP; that span reads IGEGTYGVV. T14 is modified (phosphothreonine). Y15 carries the post-translational modification Phosphotyrosine. Catalysis depends on D125, which acts as the Proton acceptor. T158 carries the post-translational modification Phosphothreonine.

The protein belongs to the protein kinase superfamily. CMGC Ser/Thr protein kinase family. CDC2/CDKX subfamily. As to quaternary structure, may form a complex composed of at least the catalytic subunit CRK2 and a cyclin. The cofactor is Mg(2+).

It localises to the cytoplasm. It carries out the reaction L-seryl-[protein] + ATP = O-phospho-L-seryl-[protein] + ADP + H(+). The enzyme catalyses L-threonyl-[protein] + ATP = O-phospho-L-threonyl-[protein] + ADP + H(+). It catalyses the reaction [DNA-directed RNA polymerase] + ATP = phospho-[DNA-directed RNA polymerase] + ADP + H(+). With respect to regulation, phosphorylation at Thr-14 or Tyr-15 inactivates the enzyme, while phosphorylation at Thr-158 activates it. Its function is as follows. Serine/threonine-protein kinase. Involved in the control of the cell cycle. Required for entry into S-phase and mitosis. Probable component of the kinase complex that phosphorylates the repetitive C-terminus of RNA polymerase II. The chain is Cyclin-dependent kinase 2 homolog from Theileria annulata.